A 119-amino-acid chain; its full sequence is Bombesin (119 aa).

Positions 1–29 (MSAIPLNRILPLGFLFHLLIFSFISLSSC) are cleaved as a signal peptide. The propeptide occupies 30-44 (MEFVEDPNNQGRISL). Methionine 58 carries the methionine amide modification. Residues 62 to 119 (SLQDTDFEEMESFAKRNVENMRAALLQEQNRAESERELRHAQLVVRNILEQYLKNMQN) constitute a propeptide that is removed on maturation.

Belongs to the bombesin/neuromedin-B/ranatensin family. As to expression, localized to the cutaneous granular glands in the skin and the brain.

Its subcellular location is the secreted. Functionally, stimulates smooth muscle contraction. Role in induction of hypothermia, stimulation of DNA replication and release of many gastrointestinal hormones. This is Bombesin from Bombina orientalis (Oriental fire-bellied toad).